Consider the following 1178-residue polypeptide: MSARVCKTHRVYVGRDVRNFMDIPDLIEIQLRSYDTFLHGARNTPSGADTLISGTREELGLEDVFKTTFPIESSTGDMTLEYQSYSLDEKNIKFSEAECKQKGLTYAIPLKALVDLRFNNTGEIRRKDIYMGDIPKMTERGTFIINGAERVVVSQIHRSPGVVFSHEKDKEGREVFSSRIIPYRGSWLEFEIDQKKDLIYAKLDKKRRILGTVFLRALHYETREQIIEAFYAIEKTPVCQDRAEYELLTGKILARSVTVENEQGETRVLYKAGEKIHPHVIDDLLQNGICEVYIINLEAEGSLRSAVVINCLEREEMKFSKSGAQDELSREEALCIVYSALRPSDPMTMDAAEKDLQTMFFSPRRYDLGRVGRYKLNKKFRSDSPTTECTLTLDDIVNTMKFLIRMYSGDAQEDDIDHLGNRRIRSVGELMTNTLKTAFLRMERIAKERMSSKETETIKPQDLISIKPIMAAIKEFFGASQLSQFMDQVNPLAELTHKRRLNALGPGGLSRERAGFEVRDVHYTHYGRMCPIETPEGPNIGLIVSMANYARVNGYGFLEVPYVRVRDGVVTKEIEYLDAMDEDRYYIGQDSTAVGPDGVIRVDHVSCRHRGDYSTRSPKDIQYMDVSPKQIISVSASLIPFLEHDDANRALMGSNMQRQGVPLIFPEPPRVGTGMEEKCAYDSGVLVKAKQDGTVAYVSSEKIVVCSAAASGEEQEVVYPLLKYQRTNQDTCYHQRPIVHVGDRVQVGDALADGPATYRGELALGRNILVGFVPWNGYNYEDAILISHRVVKEDMFTSVHIKEFSTEVRETKLGSERMTNDIPNKSEKNLDNLDAEGIIRIGSKVRAGDVLIGKITPKSESETTPEFRLLNSIFGEKAKEVRDSSLRVPHGVEGTVIDVQRLRRSEGDDLNPGVSEVVKVLIATKRKLREGDKMAGRHGNKGIVARILPEEDMPYLDDGTPLDVCLNPLGVPSRMNIGQILESELGLAGLRLDEWYESPVFQSPSNEQIGEKLMQAGFPTNSKVMLRDGRTGDYFQNPVFVGVIYFMKLAHLVDDKMHARSTGPYSLVTQQPLGGKAQFGGQRLGEMEVWALEAYGAANTLQELLTIKSDDMHGRSKIYEAIVKGEASSPTGIPESFNVLVQELRGLALDFTIYDAKGKQIPLTERDEEMTNKIGSKF.

This sequence belongs to the RNA polymerase beta chain family. As to quaternary structure, the RNAP catalytic core consists of 2 alpha, 1 beta, 1 beta' and 1 omega subunit. When a sigma factor is associated with the core the holoenzyme is formed, which can initiate transcription.

The enzyme catalyses RNA(n) + a ribonucleoside 5'-triphosphate = RNA(n+1) + diphosphate. In terms of biological role, DNA-dependent RNA polymerase catalyzes the transcription of DNA into RNA using the four ribonucleoside triphosphates as substrates. This Treponema pallidum (strain Nichols) protein is DNA-directed RNA polymerase subunit beta.